Consider the following 525-residue polypeptide: GMP synthase [glutamine-hydrolyzing] (525 aa).

One can recognise a Glutamine amidotransferase type-1 domain in the interval 9–207; sequence RILILDFGSQ…VVDICKCEKL (199 aa). The active-site Nucleophile is the cysteine 86. Residues histidine 181 and glutamate 183 contribute to the active site. A GMPS ATP-PPase domain is found at 208–400; it reads WTSASIIDDA…LGLPYDMLYR (193 aa). Residue 235 to 241 coordinates ATP; it reads SGGVDSS.

In terms of assembly, homodimer.

It carries out the reaction XMP + L-glutamine + ATP + H2O = GMP + L-glutamate + AMP + diphosphate + 2 H(+). It functions in the pathway purine metabolism; GMP biosynthesis; GMP from XMP (L-Gln route): step 1/1. Its function is as follows. Catalyzes the synthesis of GMP from XMP. The chain is GMP synthase [glutamine-hydrolyzing] from Colwellia psychrerythraea (strain 34H / ATCC BAA-681) (Vibrio psychroerythus).